The sequence spans 201 residues: Dermatopontin (201 aa).

The signal sequence occupies residues 1-18 (MDLSLLWVLLPLVTMAWG). Residue Gln-19 is modified to Pyrrolidone carboxylic acid. Tyr-23 bears the Sulfotyrosine mark. Repeat copies occupy residues 26-79 (PYQQ…ACMP), 70-75 (DRQWNY), 80-135 (TPQS…CCRY), and 125-130 (DREWQF). The tract at residues 26 to 186 (PYQQYHDYSD…AVERDRQWKF (161 aa)) is 2 X 53-55 AA tandem repeats. 5 disulfide bridges follow: Cys-50/Cys-77, Cys-90/Cys-132, Cys-106/Cys-133, Cys-139/Cys-196, and Cys-143/Cys-189. Positions 70 to 186 (DRQWNYACMP…AVERDRQWKF (117 aa)) are 3 X 6 AA repeats of D-R-[EQ]-W-[NQK]-[FY]. 4 positions are modified to sulfotyrosine: Tyr-162, Tyr-164, Tyr-166, and Tyr-167. The 3-3 repeat unit spans residues 181-186 (DRQWKF). A Sulfotyrosine modification is found at Tyr-194.

The protein belongs to the dermatopontin family. Interacts with TGFB1, DCN and collagen. Sulfated on tyrosine residue(s). As to expression, expressed in fibroblasts, heart, skeletal muscle, brain and pancreas. Expressed at an intermediate level in lung and kidney, and at a low level in liver and placenta. Expressed at a lower level in fibroblasts from hypertrophic scar lesional skin and in fibroblasts from patients with systemic sclerosis than in normal skin fibroblasts.

The protein resides in the secreted. It is found in the extracellular space. The protein localises to the extracellular matrix. Its function is as follows. Seems to mediate adhesion by cell surface integrin binding. May serve as a communication link between the dermal fibroblast cell surface and its extracellular matrix environment. Enhances TGFB1 activity. Inhibits cell proliferation. Accelerates collagen fibril formation, and stabilizes collagen fibrils against low-temperature dissociation. The chain is Dermatopontin (DPT) from Homo sapiens (Human).